A 1416-amino-acid polypeptide reads, in one-letter code: DNA-directed RNA polymerase subunit beta' (1416 aa).

Zn(2+)-binding residues include Cys-71, Cys-73, Cys-86, and Cys-89. The Mg(2+) site is built by Asp-461, Asp-463, and Asp-465. Residues Cys-815, Cys-892, Cys-899, and Cys-902 each coordinate Zn(2+).

It belongs to the RNA polymerase beta' chain family. As to quaternary structure, the RNAP catalytic core consists of 2 alpha, 1 beta, 1 beta' and 1 omega subunit. When a sigma factor is associated with the core the holoenzyme is formed, which can initiate transcription. Mg(2+) serves as cofactor. Zn(2+) is required as a cofactor.

The enzyme catalyses RNA(n) + a ribonucleoside 5'-triphosphate = RNA(n+1) + diphosphate. Functionally, DNA-dependent RNA polymerase catalyzes the transcription of DNA into RNA using the four ribonucleoside triphosphates as substrates. The sequence is that of DNA-directed RNA polymerase subunit beta' from Blochmanniella pennsylvanica (strain BPEN).